The chain runs to 1576 residues: ABC transporter ALT5 (1576 aa).

10 helical membrane passes run 27–47 (LKFELLFFATIPPAIFLILAV), 72–92 (ILGFVNLVLQVTLLVMTTQGT), 99–119 (GLFLSARIVTTSSTLLSVIVC), 267–287 (LPLSQALAKTLLLPLLLPILP), 289–309 (LVLIGLSISQAFLIQAVTGFL), 321–341 (GLIGATILIYVGIALSTSLYW), 387–407 (VLAGFLNLHELWASLIQAVIV), 417–437 (GFFALPVGLTVACFVALATVG), 500–520 (ITAMTLSLLPELIAPVITLAA), and 525–545 (VATSNIFTIVALISLLTAPLG). The ABC transmembrane type-1 1 domain maps to 289–556 (LVLIGLSISQ…LFQSVAPLMS (268 aa)). One can recognise an ABC transporter 1 domain in the interval 602-834 (FRVVNGSFRW…NGGYLQSLCV (233 aa)). 636–643 (GPVGSGKS) lines the ATP pocket. Helical transmembrane passes span 915–935 (VVALVAFLASAICYGFFFAFP), 957–977 (FWVGIYGLFHALSLLGGFLTM), 981–1001 (VTSISLVSGASLHSSIFAAIM), 1035–1054 (LIQFVCDLAISLSMAGVLAA), 1060–1078 (AAMYPIAIALMYATVKLYL), 1142–1162 (WLLFILNIIVMFLAIFVVTLV), and 1171–1191 (GFAGSGLVMLLQFGQILASAM). The ABC transmembrane type-1 2 domain maps to 919-1199 (VAFLASAICY…AMQSYAKLET (281 aa)). Residues 1236-1567 (IKLDGVSASY…SHSKFRALCE (332 aa)) enclose the ABC transporter 2 domain. Position 1278–1285 (1278–1285 (GRSGSGKS)) interacts with ATP.

It belongs to the ABC transporter superfamily. ABCC family. Conjugate transporter (TC 3.A.1.208) subfamily.

The protein localises to the cell membrane. ABC transporter that may provide the dual role AAL-toxin export and self-protection by allowing the fungus to evade the harmful effect of its own AAL-toxin production. The protein is ABC transporter ALT5 of Alternaria alternata (Alternaria rot fungus).